The primary structure comprises 167 residues: Ribosome maturation factor RimM (167 aa).

The region spanning 92–166 (DDEFYHADLI…RIVADPPEEQ (75 aa)) is the PRC barrel domain.

This sequence belongs to the RimM family. In terms of assembly, binds ribosomal protein uS19.

It localises to the cytoplasm. In terms of biological role, an accessory protein needed during the final step in the assembly of 30S ribosomal subunit, possibly for assembly of the head region. Essential for efficient processing of 16S rRNA. May be needed both before and after RbfA during the maturation of 16S rRNA. It has affinity for free ribosomal 30S subunits but not for 70S ribosomes. The polypeptide is Ribosome maturation factor RimM (Paracoccus denitrificans (strain Pd 1222)).